A 113-amino-acid chain; its full sequence is Large ribosomal subunit protein bL19 (113 aa).

The protein belongs to the bacterial ribosomal protein bL19 family.

This protein is located at the 30S-50S ribosomal subunit interface and may play a role in the structure and function of the aminoacyl-tRNA binding site. The sequence is that of Large ribosomal subunit protein bL19 from Mycobacterium avium (strain 104).